Consider the following 401-residue polypeptide: Probable plasmid-partitioning protein ParB (401 aa).

A disordered region spans residues lysine 232–glutamate 272.

Belongs to the ParB family.

This is Probable plasmid-partitioning protein ParB from Xylella fastidiosa (strain 9a5c).